A 360-amino-acid polypeptide reads, in one-letter code: Phospho-N-acetylmuramoyl-pentapeptide-transferase (360 aa).

10 consecutive transmembrane segments (helical) span residues 24–44 (RAVM…PWTI), 69–89 (GTPT…TLLW), 92–112 (WANP…ALGF), 133–153 (MVWQ…LAAN), 158–178 (ILIV…GFLV), 199–219 (GLAT…AYVS), 239–259 (VAIF…FNAY), 263–283 (VFMG…VAVI), 288–308 (FVLV…MLQV), and 337–357 (QVVV…LSTL).

This sequence belongs to the glycosyltransferase 4 family. MraY subfamily. Mg(2+) serves as cofactor.

It is found in the cell inner membrane. The enzyme catalyses UDP-N-acetyl-alpha-D-muramoyl-L-alanyl-gamma-D-glutamyl-meso-2,6-diaminopimeloyl-D-alanyl-D-alanine + di-trans,octa-cis-undecaprenyl phosphate = di-trans,octa-cis-undecaprenyl diphospho-N-acetyl-alpha-D-muramoyl-L-alanyl-D-glutamyl-meso-2,6-diaminopimeloyl-D-alanyl-D-alanine + UMP. It functions in the pathway cell wall biogenesis; peptidoglycan biosynthesis. In terms of biological role, catalyzes the initial step of the lipid cycle reactions in the biosynthesis of the cell wall peptidoglycan: transfers peptidoglycan precursor phospho-MurNAc-pentapeptide from UDP-MurNAc-pentapeptide onto the lipid carrier undecaprenyl phosphate, yielding undecaprenyl-pyrophosphoryl-MurNAc-pentapeptide, known as lipid I. The polypeptide is Phospho-N-acetylmuramoyl-pentapeptide-transferase (Neisseria meningitidis serogroup C (strain 053442)).